Reading from the N-terminus, the 206-residue chain is Glutathione peroxidase 1 (206 aa).

Residue serine 37 is modified to Phosphoserine. The active site involves selenocysteine 52. Position 52 (selenocysteine 52) is a non-standard amino acid, selenocysteine. 3 positions are modified to N6-acetyllysine; alternate: lysine 91, lysine 117, and lysine 151. 3 positions are modified to N6-succinyllysine; alternate: lysine 91, lysine 117, and lysine 151. Phosphoserine occurs at positions 200 and 204.

This sequence belongs to the glutathione peroxidase family. As to quaternary structure, homotetramer. Interacts with MIEN1. During periods of oxidative stress, Sec-52 may react with a superoxide radical, irreversibly lose hydroselenide and be converted to dehydroalanine.

It localises to the cytoplasm. Its subcellular location is the mitochondrion. It carries out the reaction 2 glutathione + H2O2 = glutathione disulfide + 2 H2O. The enzyme catalyses a hydroperoxy polyunsaturated fatty acid + 2 glutathione = a hydroxy polyunsaturated fatty acid + glutathione disulfide + H2O. It catalyses the reaction tert-butyl hydroperoxide + 2 glutathione = tert-butanol + glutathione disulfide + H2O. The catalysed reaction is cumene hydroperoxide + 2 glutathione = 2-phenylpropan-2-ol + glutathione disulfide + H2O. It carries out the reaction (13S)-hydroperoxy-(9Z,11E)-octadecadienoate + 2 glutathione = (13S)-hydroxy-(9Z,11E)-octadecadienoate + glutathione disulfide + H2O. The enzyme catalyses (9S)-hydroperoxy-(10E,12Z)-octadecadienoate + 2 glutathione = (9S)-hydroxy-(10E,12Z)-octadecadienoate + glutathione disulfide + H2O. It catalyses the reaction (5S)-hydroperoxy-(6E,8Z,11Z,14Z)-eicosatetraenoate + 2 glutathione = (5S)-hydroxy-(6E,8Z,11Z,14Z)-eicosatetraenoate + glutathione disulfide + H2O. The catalysed reaction is (12S)-hydroperoxy-(5Z,8Z,10E,14Z)-eicosatetraenoate + 2 glutathione = (12S)-hydroxy-(5Z,8Z,10E,14Z)-eicosatetraenoate + glutathione disulfide + H2O. It carries out the reaction (12R)-hydroperoxy-(5Z,8Z,10E,14Z)-eicosatetraenoate + 2 glutathione = (12R)-hydroxy-(5Z,8Z,10E,14Z)-eicosatetraenoate + glutathione disulfide + H2O. The enzyme catalyses (15S)-hydroperoxy-(5Z,8Z,11Z,13E)-eicosatetraenoate + 2 glutathione = (15S)-hydroxy-(5Z,8Z,11Z,13E)-eicosatetraenoate + glutathione disulfide + H2O. It catalyses the reaction (5S)-hydroperoxy-(6E,8Z,11Z,14Z,17Z)-eicosapentaenoate + 2 glutathione = (5S)-hydroxy-(6E,8Z,11Z,14Z,17Z)-eicosapentaenoate + glutathione disulfide + H2O. The catalysed reaction is (12S)-hydroperoxy-(5Z,8Z,10E,14Z,17Z)-eicosapentaenoate + 2 glutathione = (12S)-hydroxy-(5Z,8Z,10E,14Z,17Z)-eicosapentaenoate + glutathione disulfide + H2O. It carries out the reaction (15S)-hydroperoxy-(5Z,8Z,11Z,13E,17Z)-eicosapentaenoate + 2 glutathione = (15S)-hydroxy-(5Z,8Z,11Z,13E,17Z)-eicosapentaenoate + glutathione disulfide + H2O. The enzyme catalyses (15S)-hydroperoxy-(11Z,13E)-eicosadienoate + 2 glutathione = (15S)-hydroxy-(11Z,13E)-eicosadienoate + glutathione disulfide + H2O. It catalyses the reaction (17S)-hydroperoxy-(4Z,7Z,10Z,13Z,15E,19Z)-docosahexaenoate + 2 glutathione = (17S)-hydroxy-(4Z,7Z,10Z,13Z,15E,19Z)-docosahexaenoate + glutathione disulfide + H2O. In terms of biological role, catalyzes the reduction of hydroperoxides in a glutathione-dependent manner thus regulating cellular redox homeostasis. Can reduce small soluble hydroperoxides such as H2O2, cumene hydroperoxide and tert-butyl hydroperoxide, as well as several fatty acid-derived hydroperoxides. In platelets catalyzes the reduction of 12-hydroperoxyeicosatetraenoic acid, the primary product of the arachidonate 12-lipoxygenase pathway. In Sus scrofa (Pig), this protein is Glutathione peroxidase 1 (GPX1).